The sequence spans 84 residues: Cell division topological specificity factor (84 aa).

This sequence belongs to the MinE family.

Prevents the cell division inhibition by proteins MinC and MinD at internal division sites while permitting inhibition at polar sites. This ensures cell division at the proper site by restricting the formation of a division septum at the midpoint of the long axis of the cell. The protein is Cell division topological specificity factor of Granulibacter bethesdensis (strain ATCC BAA-1260 / CGDNIH1).